Reading from the N-terminus, the 519-residue chain is Exodeoxyribonuclease 7 large subunit (519 aa).

The segment at 493-519 (AISTGKSSNTNRKSAPAREPGKQGSLF) is disordered. Over residues 496–505 (TGKSSNTNRK) the composition is skewed to polar residues.

The protein belongs to the XseA family. As to quaternary structure, heterooligomer composed of large and small subunits.

It localises to the cytoplasm. The catalysed reaction is Exonucleolytic cleavage in either 5'- to 3'- or 3'- to 5'-direction to yield nucleoside 5'-phosphates.. Its function is as follows. Bidirectionally degrades single-stranded DNA into large acid-insoluble oligonucleotides, which are then degraded further into small acid-soluble oligonucleotides. In Chelativorans sp. (strain BNC1), this protein is Exodeoxyribonuclease 7 large subunit.